We begin with the raw amino-acid sequence, 314 residues long: Phosphoribosylaminoimidazole-succinocarboxamide synthase (314 aa).

The protein belongs to the SAICAR synthetase family.

The catalysed reaction is 5-amino-1-(5-phospho-D-ribosyl)imidazole-4-carboxylate + L-aspartate + ATP = (2S)-2-[5-amino-1-(5-phospho-beta-D-ribosyl)imidazole-4-carboxamido]succinate + ADP + phosphate + 2 H(+). Its pathway is purine metabolism; IMP biosynthesis via de novo pathway; 5-amino-1-(5-phospho-D-ribosyl)imidazole-4-carboxamide from 5-amino-1-(5-phospho-D-ribosyl)imidazole-4-carboxylate: step 1/2. This chain is Phosphoribosylaminoimidazole-succinocarboxamide synthase, found in Bacteroides fragilis (strain ATCC 25285 / DSM 2151 / CCUG 4856 / JCM 11019 / LMG 10263 / NCTC 9343 / Onslow / VPI 2553 / EN-2).